Here is a 503-residue protein sequence, read N- to C-terminus: Probable inactive beta-glucosidase 33 (503 aa).

The signal sequence occupies residues 1 to 30 (MATGELALVSSLFIVVVFLLLGAVAREASA). A beta-D-glucoside contacts are provided by residues glutamine 50, histidine 150, and 195-196 (NQ). The cysteines at positions 215 and 223 are disulfide-linked. The N-linked (GlcNAc...) asparagine glycan is linked to asparagine 222. 2 residues coordinate a beta-D-glucoside: tyrosine 339 and glutamate 399. The active-site Nucleophile is the glutamate 399. A glycan (N-linked (GlcNAc...) asparagine) is linked at asparagine 436. Residues tryptophan 446, 453-454 (EF), and phenylalanine 462 contribute to the a beta-D-glucoside site.

Belongs to the glycosyl hydrolase 1 family.

The protein is Probable inactive beta-glucosidase 33 (BGLU33) of Oryza sativa subsp. japonica (Rice).